We begin with the raw amino-acid sequence, 343 residues long: Transmembrane protein 82 (343 aa).

Helical transmembrane passes span 30–50 (GLIG…YFFV), 77–97 (LAGL…LVVL), 121–141 (LQLY…GLSF), 145–167 (GAPH…GLGA), 203–223 (LLGR…VALI), 233–252 (AMRF…IYMQ), 263–283 (SQVQ…LTVG), and 285–305 (WLDL…LVGV). Over residues 320–333 (QRPPVSTPSQPLPS) the composition is skewed to pro residues. A disordered region spans residues 320-343 (QRPPVSTPSQPLPSAPQSQSSAPS). A compositionally biased stretch (low complexity) spans 334-343 (APQSQSSAPS).

This sequence belongs to the TMEM82 family.

Its subcellular location is the membrane. This Homo sapiens (Human) protein is Transmembrane protein 82 (TMEM82).